Consider the following 342-residue polypeptide: Glycerol-1-phosphate dehydrogenase [NAD(P)+] (342 aa).

NAD(+)-binding positions include 84–88 (GRPID) and 106–109 (TSAS). Aspartate 111 contributes to the substrate binding site. Serine 115 serves as a coordination point for NAD(+). Position 160 (aspartate 160) interacts with substrate. Zn(2+) is bound by residues aspartate 160 and histidine 241. Histidine 245 is a binding site for substrate. Residue histidine 260 coordinates Zn(2+).

The protein belongs to the glycerol-1-phosphate dehydrogenase family. In terms of assembly, homodimer. It depends on Zn(2+) as a cofactor.

The protein resides in the cytoplasm. It carries out the reaction sn-glycerol 1-phosphate + NAD(+) = dihydroxyacetone phosphate + NADH + H(+). The enzyme catalyses sn-glycerol 1-phosphate + NADP(+) = dihydroxyacetone phosphate + NADPH + H(+). The protein operates within membrane lipid metabolism; glycerophospholipid metabolism. Its function is as follows. Catalyzes the NAD(P)H-dependent reduction of dihydroxyacetonephosphate (DHAP or glycerone phosphate) to glycerol 1-phosphate (G1P). The G1P thus generated is used as the glycerophosphate backbone of phospholipids in the cellular membranes of Archaea. The polypeptide is Glycerol-1-phosphate dehydrogenase [NAD(P)+] (Pyrobaculum islandicum (strain DSM 4184 / JCM 9189 / GEO3)).